Here is a 329-residue protein sequence, read N- to C-terminus: Cytosolic arginine sensor for mTORC1 subunit 2 (329 aa).

ACT domains are found at residues 72 to 139 (ADAT…MHTL) and 262 to 322 (ELWK…NALQ).

It belongs to the GATS family. As to quaternary structure, may form homodimers and heterodimers.

The protein resides in the cytoplasm. It localises to the cytosol. Functions as a negative regulator of the TORC1 signaling pathway. The protein is Cytosolic arginine sensor for mTORC1 subunit 2 of Xenopus laevis (African clawed frog).